The following is a 606-amino-acid chain: Homeobox protein B-H1 (606 aa).

Positions 1 to 14 (MKDSMSILTQTPSE) are enriched in polar residues. 4 disordered regions span residues 1–65 (MKDS…PAVA), 104–188 (YKQQ…HPHA), 261–340 (APAG…AFTD), and 508–606 (AAAN…QIQV). Over residues 21–40 (QLHHHLSHHHHPALHHHPVL) the composition is skewed to basic residues. The span at 41–65 (QHHYSLQQQHQQQQQQQPPAPPAVA) shows a compositional bias: low complexity. Residues 108 to 118 (QQHHHHHHQSH) are compositionally biased toward basic residues. Positions 119-138 (HNNNNHSGGSSGGTSPTHHN) are enriched in low complexity. The segment covering 166 to 188 (HHLHPQSHPHPHPHPHSHPHPHA) has biased composition (basic residues). Residues 266-284 (ELDDSSDYHEENEDCDSDE) are compositionally biased toward acidic residues. Gly residues predominate over residues 286–295 (GSAGGGGGGS). Residues 297–314 (HMDDHSVCSNGGKDDDGN) show a composition bias toward basic and acidic residues. Residues 315 to 325 (SIKSGSTSDMS) show a composition bias toward polar residues. The segment at residues 331–390 (QRKARTAFTDHQLQTLEKSFERQKYLSVQERQELAHKLDLSDCQVKTWYQNRRTKWMRQT) is a DNA-binding region (homeobox). Residues 513–522 (GGPPPPPPPS) show a composition bias toward pro residues. Low complexity predominate over residues 523–534 (SAAAATGGSPSP). A compositionally biased stretch (pro residues) spans 561–576 (ASPPLPLPLARPPSTP).

The protein belongs to the Antp homeobox family. As to expression, abundant in the eye-antenna imaginal disk.

The protein localises to the nucleus. Functionally required in R1 and R6 receptor cells and primary pigment cells for normal eye development. The sequence is that of Homeobox protein B-H1 (B-H1) from Drosophila ananassae (Fruit fly).